Consider the following 289-residue polypeptide: uncharacterized protein (289 aa).

10 consecutive transmembrane segments (helical) span residues 7–27, 33–53, 65–85, 92–112, 123–143, 148–168, 182–202, 212–232, 241–261, and 265–285; these read LLLA…KIGL, FNLA…WVFW, WLHL…FQFL, ATNA…WGLV, GVFL…LEFF, IFGD…TVLG, AYAF…SGFA, VAAL…VWYY, SVAV…FYAL, and PDFF…LTTA. 2 EamA domains span residues 14–136 and 159–285; these read LIWA…LIVS and FLWA…LTTA.

Belongs to the EamA transporter family.

The protein resides in the cell membrane. This is an uncharacterized protein from Archaeoglobus fulgidus (strain ATCC 49558 / DSM 4304 / JCM 9628 / NBRC 100126 / VC-16).